The chain runs to 86 residues: Small ribosomal subunit protein bS20 (86 aa).

The segment at 1-27 (MANNKSAKKRAIQAEKRRQHNASRRSM) is disordered.

Belongs to the bacterial ribosomal protein bS20 family.

Its function is as follows. Binds directly to 16S ribosomal RNA. The chain is Small ribosomal subunit protein bS20 from Vibrio vulnificus (strain CMCP6).